The chain runs to 920 residues: Translation initiation factor IF-2 (920 aa).

The segment at 33–305 is disordered; sequence KSASSTVEAP…RGRKSKRAKR (273 aa). The segment covering 53–86 has biased composition (low complexity); it reads SKSAPAPAKSAGNGATAAPATSATPATAAAAAAP. 3 stretches are compositionally biased toward pro residues: residues 87–159, 179–193, and 201–212; these read APAP…PAPR, PRPQ…PGTP, and NMPPRPAGPRPG. The segment covering 225–291 has biased composition (gly residues); the sequence is PGGRGPGGGG…GAAGAFGRPG (67 aa). Residues 295–304 show a composition bias toward basic residues; that stretch reads KRGRKSKRAK. The region spanning 416–588 is the tr-type G domain; it reads IRPPVVTVMG…VLLTADASLD (173 aa). Residues 425–432 are G1; the sequence is GHVDHGKT. 425–432 provides a ligand contact to GTP; it reads GHVDHGKT. Residues 450 to 454 are G2; sequence GITQH. The tract at residues 475-478 is G3; sequence DTPG. GTP is bound by residues 475–479 and 529–532; these read DTPGH and NKID. A G4 region spans residues 529–532; it reads NKID. A G5 region spans residues 565-567; it reads SAK.

It belongs to the TRAFAC class translation factor GTPase superfamily. Classic translation factor GTPase family. IF-2 subfamily.

Its subcellular location is the cytoplasm. Functionally, one of the essential components for the initiation of protein synthesis. Protects formylmethionyl-tRNA from spontaneous hydrolysis and promotes its binding to the 30S ribosomal subunits. Also involved in the hydrolysis of GTP during the formation of the 70S ribosomal complex. This is Translation initiation factor IF-2 from Mycobacterium sp. (strain JLS).